Here is a 381-residue protein sequence, read N- to C-terminus: E3 ubiquitin-protein ligase RNF133 (381 aa).

The region spanning Ser-65 to Ile-167 is the PA domain. A helical transmembrane segment spans residues Trp-186–Tyr-208. The RING-type; atypical zinc-finger motif lies at Cys-256–Lys-297. Residues Leu-340 to Leu-381 are disordered. Residues Arg-344–Ser-363 show a composition bias toward polar residues.

As to quaternary structure, interacts with E3 ligase UBE2J1. Auto-ubiquitinated.

The protein resides in the endoplasmic reticulum membrane. It carries out the reaction S-ubiquitinyl-[E2 ubiquitin-conjugating enzyme]-L-cysteine + [acceptor protein]-L-lysine = [E2 ubiquitin-conjugating enzyme]-L-cysteine + N(6)-ubiquitinyl-[acceptor protein]-L-lysine.. It functions in the pathway protein modification; protein ubiquitination. In terms of biological role, has E3 ubiquitin-protein ligase activity. Plays a role in male fecundity through the interaction with the E2 ubituitin-protein ligase UBE2J1. In Rattus norvegicus (Rat), this protein is E3 ubiquitin-protein ligase RNF133 (Rnf133).